Here is a 64-residue protein sequence, read N- to C-terminus: Large ribosomal subunit protein bL35 (64 aa).

Residues 1 to 28 (MPKVKTKSGAKKRFKLTGSGKIKRKSAY) are disordered.

Belongs to the bacterial ribosomal protein bL35 family.

The polypeptide is Large ribosomal subunit protein bL35 (Cytophaga hutchinsonii (strain ATCC 33406 / DSM 1761 / CIP 103989 / NBRC 15051 / NCIMB 9469 / D465)).